We begin with the raw amino-acid sequence, 126 residues long: Aspartate 1-decarboxylase (126 aa).

Ser25 (schiff-base intermediate with substrate; via pyruvic acid) is an active-site residue. Residue Ser25 is modified to Pyruvic acid (Ser). Thr57 contributes to the substrate binding site. Residue Tyr58 is the Proton donor of the active site. 72-74 serves as a coordination point for substrate; the sequence is GAA.

The protein belongs to the PanD family. Heterooctamer of four alpha and four beta subunits. Requires pyruvate as cofactor. In terms of processing, is synthesized initially as an inactive proenzyme, which is activated by self-cleavage at a specific serine bond to produce a beta-subunit with a hydroxyl group at its C-terminus and an alpha-subunit with a pyruvoyl group at its N-terminus.

It is found in the cytoplasm. It carries out the reaction L-aspartate + H(+) = beta-alanine + CO2. Its pathway is cofactor biosynthesis; (R)-pantothenate biosynthesis; beta-alanine from L-aspartate: step 1/1. Functionally, catalyzes the pyruvoyl-dependent decarboxylation of aspartate to produce beta-alanine. The chain is Aspartate 1-decarboxylase from Campylobacter jejuni subsp. jejuni serotype O:6 (strain 81116 / NCTC 11828).